The chain runs to 291 residues: Pantothenate synthetase (291 aa).

33 to 40 (MGALHEGH) is a binding site for ATP. The active-site Proton donor is the His40. A (R)-pantoate-binding site is contributed by Gln64. Residue Gln64 coordinates beta-alanine. 157-160 (GEKD) serves as a coordination point for ATP. Gln163 lines the (R)-pantoate pocket. ATP is bound by residues Val186 and 194 to 197 (LSSR).

It belongs to the pantothenate synthetase family. As to quaternary structure, homodimer.

Its subcellular location is the cytoplasm. It carries out the reaction (R)-pantoate + beta-alanine + ATP = (R)-pantothenate + AMP + diphosphate + H(+). Its pathway is cofactor biosynthesis; (R)-pantothenate biosynthesis; (R)-pantothenate from (R)-pantoate and beta-alanine: step 1/1. In terms of biological role, catalyzes the condensation of pantoate with beta-alanine in an ATP-dependent reaction via a pantoyl-adenylate intermediate. This is Pantothenate synthetase from Rubrobacter xylanophilus (strain DSM 9941 / JCM 11954 / NBRC 16129 / PRD-1).